We begin with the raw amino-acid sequence, 361 residues long: Phosphoserine aminotransferase (361 aa).

R42 is an L-glutamate binding site. Pyridoxal 5'-phosphate contacts are provided by residues 76–77, W102, T152, D172, and Q195; that span reads AT. Position 196 is an N6-(pyridoxal phosphate)lysine (K196). Position 237–238 (237–238) interacts with pyridoxal 5'-phosphate; sequence NT.

This sequence belongs to the class-V pyridoxal-phosphate-dependent aminotransferase family. SerC subfamily. Homodimer. The cofactor is pyridoxal 5'-phosphate.

The protein resides in the cytoplasm. It carries out the reaction O-phospho-L-serine + 2-oxoglutarate = 3-phosphooxypyruvate + L-glutamate. The catalysed reaction is 4-(phosphooxy)-L-threonine + 2-oxoglutarate = (R)-3-hydroxy-2-oxo-4-phosphooxybutanoate + L-glutamate. It functions in the pathway amino-acid biosynthesis; L-serine biosynthesis; L-serine from 3-phospho-D-glycerate: step 2/3. It participates in cofactor biosynthesis; pyridoxine 5'-phosphate biosynthesis; pyridoxine 5'-phosphate from D-erythrose 4-phosphate: step 3/5. Its function is as follows. Catalyzes the reversible conversion of 3-phosphohydroxypyruvate to phosphoserine and of 3-hydroxy-2-oxo-4-phosphonooxybutanoate to phosphohydroxythreonine. This chain is Phosphoserine aminotransferase, found in Xanthomonas campestris pv. campestris (strain B100).